A 484-amino-acid chain; its full sequence is Glycogen synthase 2 (484 aa).

ADP-alpha-D-glucose is bound at residue K15.

It belongs to the glycosyltransferase 1 family. Bacterial/plant glycogen synthase subfamily.

The catalysed reaction is [(1-&gt;4)-alpha-D-glucosyl](n) + ADP-alpha-D-glucose = [(1-&gt;4)-alpha-D-glucosyl](n+1) + ADP + H(+). Its pathway is glycan biosynthesis; glycogen biosynthesis. In terms of biological role, synthesizes alpha-1,4-glucan chains using ADP-glucose. The sequence is that of Glycogen synthase 2 from Geobacter metallireducens (strain ATCC 53774 / DSM 7210 / GS-15).